The sequence spans 470 residues: ESX-4 secretion system ATPase EccB4 (470 aa).

Residues 44–64 (LALGCVLAIVAAMGCAFVALL) form a helical membrane-spanning segment.

Belongs to the EccB family. Part of the ESX-4 / type VII secretion system (T7SS), which is composed of cytosolic and membrane components.

Its subcellular location is the cell membrane. Its function is as follows. An ATPase. The polypeptide is ESX-4 secretion system ATPase EccB4 (eccB4) (Mycobacterium tuberculosis (strain CDC 1551 / Oshkosh)).